A 138-amino-acid polypeptide reads, in one-letter code: Phosphoribosyl-AMP cyclohydrolase (138 aa).

Asp85 lines the Mg(2+) pocket. Cys86 is a binding site for Zn(2+). Mg(2+) contacts are provided by Asp87 and Asp89. 2 residues coordinate Zn(2+): Cys102 and Cys109.

It belongs to the PRA-CH family. In terms of assembly, homodimer. It depends on Mg(2+) as a cofactor. Zn(2+) is required as a cofactor.

The protein localises to the cytoplasm. It carries out the reaction 1-(5-phospho-beta-D-ribosyl)-5'-AMP + H2O = 1-(5-phospho-beta-D-ribosyl)-5-[(5-phospho-beta-D-ribosylamino)methylideneamino]imidazole-4-carboxamide. It participates in amino-acid biosynthesis; L-histidine biosynthesis; L-histidine from 5-phospho-alpha-D-ribose 1-diphosphate: step 3/9. In terms of biological role, catalyzes the hydrolysis of the adenine ring of phosphoribosyl-AMP. The sequence is that of Phosphoribosyl-AMP cyclohydrolase from Methanothermobacter thermautotrophicus (strain ATCC 29096 / DSM 1053 / JCM 10044 / NBRC 100330 / Delta H) (Methanobacterium thermoautotrophicum).